We begin with the raw amino-acid sequence, 464 residues long: Secretion-regulating guanine nucleotide exchange factor (464 aa).

RCC1 repeat units follow at residues 15-67, 68-119, 120-171, 172-230, 231-283, 284-351, and 352-402; these read AVLF…VTDG, GDLF…LTEK, GQVL…TTAT, GSVF…LTDT, GELY…KTET, GKVF…VIRD, and KCCS…LAVC. A disordered region spans residues 422–464; sequence DDTENTESQGAVDRDRLEGETISDLNPDRTRNGGGGCESETVQ. Ser-429 is subject to Phosphoserine.

As to quaternary structure, interacts with SEC5. The interaction occurs only in the presence of magnesium or manganese and is stimulated by dCTP or GTP.

It is found in the cytoplasm. The protein resides in the nucleus. Its function is as follows. Probable guanine nucleotide exchange factor (GEF), which may be involved in the secretion process. The sequence is that of Secretion-regulating guanine nucleotide exchange factor (Sergef) from Mus musculus (Mouse).